We begin with the raw amino-acid sequence, 205 residues long: Large ribosomal subunit protein uL4 (205 aa).

A disordered region spans residues 47 to 70; that stretch reads TRAQKSRAEVSGGGKKPFRQKGTG.

It belongs to the universal ribosomal protein uL4 family. Part of the 50S ribosomal subunit.

Functionally, one of the primary rRNA binding proteins, this protein initially binds near the 5'-end of the 23S rRNA. It is important during the early stages of 50S assembly. It makes multiple contacts with different domains of the 23S rRNA in the assembled 50S subunit and ribosome. Its function is as follows. Forms part of the polypeptide exit tunnel. The polypeptide is Large ribosomal subunit protein uL4 (Acinetobacter baylyi (strain ATCC 33305 / BD413 / ADP1)).